The following is a 101-amino-acid chain: NAD(P)H-quinone oxidoreductase subunit 4L, chloroplastic (101 aa).

Helical transmembrane passes span Ile-2 to Ile-22, Met-32 to Phe-52, and Ile-61 to Val-81.

Belongs to the complex I subunit 4L family. In terms of assembly, NDH is composed of at least 16 different subunits, 5 of which are encoded in the nucleus.

Its subcellular location is the plastid. It localises to the chloroplast thylakoid membrane. It catalyses the reaction a plastoquinone + NADH + (n+1) H(+)(in) = a plastoquinol + NAD(+) + n H(+)(out). The enzyme catalyses a plastoquinone + NADPH + (n+1) H(+)(in) = a plastoquinol + NADP(+) + n H(+)(out). Functionally, NDH shuttles electrons from NAD(P)H:plastoquinone, via FMN and iron-sulfur (Fe-S) centers, to quinones in the photosynthetic chain and possibly in a chloroplast respiratory chain. The immediate electron acceptor for the enzyme in this species is believed to be plastoquinone. Couples the redox reaction to proton translocation, and thus conserves the redox energy in a proton gradient. The protein is NAD(P)H-quinone oxidoreductase subunit 4L, chloroplastic of Aethionema cordifolium (Lebanon stonecress).